The primary structure comprises 379 residues: Putative F-box protein At2g33190 (379 aa).

The 48-residue stretch at 6-53 (NGWSKLYPDLLRSIFESLSCLDFHRAGTVCSNWYAVSRSCPLYPWRIV) folds into the F-box domain.

The protein is Putative F-box protein At2g33190 of Arabidopsis thaliana (Mouse-ear cress).